A 525-amino-acid chain; its full sequence is Transcriptional regulatory protein TOD6 (525 aa).

The interval 22 to 82 is disordered; sequence GFSILSKHPH…NNPSSWDPSD (61 aa). A compositionally biased stretch (polar residues) spans 35–47; it reads LVHSHSLSHTNAK. A compositionally biased stretch (basic and acidic residues) spans 61-71; it reads STNKEEAESLK. Residues 67-124 enclose the HTH myb-type domain; that stretch reads AESLKKNNPSSWDPSDDIKLRHLKEIKNLGWKEIAHHFPNRTPNACQFRWRRLKSGNL. Residues 97-120 constitute a DNA-binding region (H-T-H motif); the sequence is WKEIAHHFPNRTPNACQFRWRRLK. Position 280 is a phosphoserine (Ser-280). Positions 283 to 308 are disordered; the sequence is PSTQIPHSTTKTRKNSHSVISSRRSS. The span at 299 to 308 shows a compositional bias: low complexity; sequence HSVISSRRSS. 3 positions are modified to phosphoserine: Ser-333, Ser-341, and Ser-366. Residues 451 to 510 form a disordered region; the sequence is TNEGCKDEEEEDDIDPLHKENGINTPSQQSQNYGMLEAKHDNPKSSELSSMTSANDIRNE. Polar residues-rich tracts occupy residues 472 to 483 and 495 to 506; these read GINTPSQQSQNY and SSELSSMTSAND.

Belongs to the DOT6 family. In terms of assembly, component of the RPD3C(L) complex composed of at least ASH1, CTI6, DEP1, DOT6, PHO23, RPD3, RXT2, RXT3, SAP30, SDS3, SIN3, TOD6; UME1 and UME6.

The protein localises to the cytoplasm. It localises to the nucleus. Functionally, component of the RPD3 histone deacetylase complex RPD3C(L) responsible for the deacetylation of lysine residues on the N-terminal part of the core histones (H2A, H2B, H3 and H4). Histone deacetylation gives a tag for epigenetic repression and plays an important role in transcriptional regulation, cell cycle progression and developmental events. TOD6 binds to sequences containing the core CGATG, which resembles the PAC (Polymerase A and C) motif. In Saccharomyces cerevisiae (strain ATCC 204508 / S288c) (Baker's yeast), this protein is Transcriptional regulatory protein TOD6 (TOD6).